The chain runs to 88 residues: Acyl carrier protein (88 aa).

Positions 4-79 (DSVPAKVMEI…AAVDYIQNKM (76 aa)) constitute a Carrier domain. The residue at position 39 (S39) is an O-(pantetheine 4'-phosphoryl)serine.

Belongs to the acyl carrier protein (ACP) family. In terms of processing, 4'-phosphopantetheine is transferred from CoA to a specific serine of apo-ACP by AcpS. This modification is essential for activity because fatty acids are bound in thioester linkage to the sulfhydryl of the prosthetic group.

It is found in the cytoplasm. It functions in the pathway lipid metabolism; fatty acid biosynthesis. In terms of biological role, carrier of the growing fatty acid chain in fatty acid biosynthesis. In Trichodesmium erythraeum (strain IMS101), this protein is Acyl carrier protein.